Here is a 146-residue protein sequence, read N- to C-terminus: Prolactin-inducible protein homolog (146 aa).

The N-terminal stretch at 1–26 (MQGLSFTSTAATFFLVLCLQLGINEG) is a signal peptide. Q27 carries the pyrrolidone carboxylic acid modification. Residue N29 is glycosylated (N-linked (GlcNAc...) asparagine). 2 disulfide bridges follow: C65/C91 and C89/C123.

Belongs to the PIP family. In terms of assembly, monomer. Interacts with AZGP1.

It localises to the secreted. The protein is Prolactin-inducible protein homolog (Pip) of Rattus norvegicus (Rat).